The sequence spans 650 residues: Threonine--tRNA ligase (650 aa).

Residues 3 to 65 form the TGS domain; the sequence is DLVKVTLPDG…DRDARLEIVT (63 aa). The segment at 248 to 548 is catalytic; the sequence is DHRRLGPQLG…LTEHYAGAFP (301 aa). Zn(2+)-binding residues include cysteine 349, histidine 400, and histidine 525.

This sequence belongs to the class-II aminoacyl-tRNA synthetase family. Homodimer. Zn(2+) is required as a cofactor.

The protein localises to the cytoplasm. It catalyses the reaction tRNA(Thr) + L-threonine + ATP = L-threonyl-tRNA(Thr) + AMP + diphosphate + H(+). Functionally, catalyzes the attachment of threonine to tRNA(Thr) in a two-step reaction: L-threonine is first activated by ATP to form Thr-AMP and then transferred to the acceptor end of tRNA(Thr). Also edits incorrectly charged L-seryl-tRNA(Thr). This chain is Threonine--tRNA ligase, found in Anaeromyxobacter dehalogenans (strain 2CP-C).